Consider the following 200-residue polypeptide: Phospholipase A2 inhibitor LNF2 (200 aa).

Residues 1 to 19 (MKSLHTICLLFIFVARGNS) form the signal peptide. Intrachain disulfides connect Cys-22-Cys-46, Cys-25-Cys-32, Cys-39-Cys-67, Cys-73-Cys-94, Cys-95-Cys-100, Cys-118-Cys-143, Cys-136-Cys-165, and Cys-169-Cys-191. Residue Asn-176 is glycosylated (N-linked (GlcNAc...) asparagine).

Belongs to the CNF-like-inhibitor family. Occurs as a mixture of oligomers. Tetrameric arrangement appears to be the predominant quaternary structure. Expressed by the liver.

It localises to the secreted. Inhibits the enzymatic activity of phospholipase A2 (PA2). This chain is Phospholipase A2 inhibitor LNF2, found in Lachesis muta muta (Bushmaster).